A 600-amino-acid polypeptide reads, in one-letter code: ATP-dependent ubiquitin transferase-like protein Cap2 (600 aa).

Residues 1–158 (MSTVVQQVPA…QEKLATTGDA (158 aa)) are E2-like domain. C109 serves as the catalytic For E2-like domain. The interval 159-373 (VELPAFPDQS…DQLRTRGEAA (215 aa)) is linker domain. An adenylation plus E1-like domain region spans residues 375–600 (DIRSKKVLII…GTVEKEPHEY (226 aa)). C548 (for E1-like domain) is an active-site residue.

In the C-terminal section; belongs to the HesA/MoeB/ThiF family. Crystallizes as a Cap2 homodimer bound on each side by a CdnD monomer.

In terms of biological role, CD-NTase priming component of a CBASS antiviral system. CBASS (cyclic oligonucleotide-based antiphage signaling system) provides immunity against bacteriophages. The CD-NTase protein (CdnD) synthesizes cyclic nucleotides in response to infection; these serve as specific second messenger signals. The signals activate a diverse range of effectors, leading to bacterial cell death and thus abortive phage infection. A type II-C(AAG) CBASS system. Its function is as follows. Primes CdnD; acts as a protein transferase, conjugating CdnD, the CD-NTase, to unidentified target(s) in the cell via an E1-E2 ubiquitin transferase-like mechanism. Upon phage infection CdnD activates and makes cyclic nucleotides. During the conjugation reaction CdnD is transiently attached to AMP. Protein conjugation requires ATP. Protects E.coli against phage T2 infection. When the cdnD-cap2-cap3-cap4 operon is introduced in E.coli there is a more than 10(3) decrease in the efficiency of T2 plaque formation. The operon does not protect against phage T5 and only about 10-fold against T7. The sequence is that of ATP-dependent ubiquitin transferase-like protein Cap2 from Enterobacter hormaechei subsp. hoffmannii (strain UCI 50).